Reading from the N-terminus, the 464-residue chain is 3-deoxy-D-manno-octulosonic acid transferase (464 aa).

Residues 2–22 traverse the membrane as a helical; Signal-anchor segment; that stretch reads MLLYYALSFILLPVYFIIILI. The 47-residue stretch at 47 to 93 folds into the RPE1 insert domain; that stretch reads DSLDFMQTSANKEEFKGDTSLRTTTYTLIREDEGLGSTYKLPLEASD. Glu107 acts as the Proton acceptor in catalysis. CMP contacts are provided by residues 311-312, 352-354, and 377-380; these read PR, FGE, and NILE.

This sequence belongs to the glycosyltransferase group 1 family. Glycosyltransferase 30 subfamily.

The protein resides in the cell inner membrane. It carries out the reaction lipid IVA (E. coli) + CMP-3-deoxy-beta-D-manno-octulosonate = alpha-Kdo-(2-&gt;6)-lipid IVA (E. coli) + CMP + H(+). It functions in the pathway bacterial outer membrane biogenesis; LPS core biosynthesis. Functionally, involved in lipopolysaccharide (LPS) biosynthesis. Catalyzes the transfer of 3-deoxy-D-manno-octulosonate (Kdo) residue(s) from CMP-Kdo to lipid IV(A), the tetraacyldisaccharide-1,4'-bisphosphate precursor of lipid A. The sequence is that of 3-deoxy-D-manno-octulosonic acid transferase (waaA) from Rickettsia conorii (strain ATCC VR-613 / Malish 7).